Here is a 217-residue protein sequence, read N- to C-terminus: Ribosomal RNA small subunit methyltransferase G (217 aa).

S-adenosyl-L-methionine contacts are provided by residues G79, L84, I130–E131, and R145.

This sequence belongs to the methyltransferase superfamily. RNA methyltransferase RsmG family.

The protein localises to the cytoplasm. The enzyme catalyses guanosine(527) in 16S rRNA + S-adenosyl-L-methionine = N(7)-methylguanosine(527) in 16S rRNA + S-adenosyl-L-homocysteine. Functionally, specifically methylates the N7 position of guanine in position 527 of 16S rRNA. The sequence is that of Ribosomal RNA small subunit methyltransferase G from Hahella chejuensis (strain KCTC 2396).